A 525-amino-acid polypeptide reads, in one-letter code: GMP synthase [glutamine-hydrolyzing] (525 aa).

The 200-residue stretch at 8 to 207 (KILILDFGSQ…VMDICGCDNK (200 aa)) folds into the Glutamine amidotransferase type-1 domain. Cys-85 functions as the Nucleophile in the catalytic mechanism. Active-site residues include His-181 and Glu-183. Positions 208–400 (WQPASIIEDA…LGLPYDMLYR (193 aa)) constitute a GMPS ATP-PPase domain. 235–241 (SGGVDSS) serves as a coordination point for ATP.

As to quaternary structure, homodimer.

It carries out the reaction XMP + L-glutamine + ATP + H2O = GMP + L-glutamate + AMP + diphosphate + 2 H(+). It functions in the pathway purine metabolism; GMP biosynthesis; GMP from XMP (L-Gln route): step 1/1. In terms of biological role, catalyzes the synthesis of GMP from XMP. The chain is GMP synthase [glutamine-hydrolyzing] from Shewanella amazonensis (strain ATCC BAA-1098 / SB2B).